The following is a 121-amino-acid chain: Flagellar protein FliT (121 aa).

The tract at residues 1–50 is required for homodimerization; sequence MNHAPHLYFAWQQLVEKSQLMLRLATEEQWDELIASEMAYVNAVQEIAHL. Positions 60–98 are fliD binding; it reads MQEQLRPMLRLILDNESKVKQLLQIRMDELAKLVGQSSV.

It belongs to the FliT family. Homodimer. Interacts with FliD and FlhC.

It localises to the cytoplasm. The protein resides in the cytosol. Functionally, dual-function protein that regulates the transcription of class 2 flagellar operons and that also acts as an export chaperone for the filament-capping protein FliD. As a transcriptional regulator, acts as an anti-FlhDC factor; it directly binds FlhC, thus inhibiting the binding of the FlhC/FlhD complex to class 2 promoters, resulting in decreased expression of class 2 flagellar operons. As a chaperone, effects FliD transition to the membrane by preventing its premature polymerization, and by directing it to the export apparatus. This chain is Flagellar protein FliT, found in Escherichia coli (strain ATCC 8739 / DSM 1576 / NBRC 3972 / NCIMB 8545 / WDCM 00012 / Crooks).